A 232-amino-acid chain; its full sequence is Platelet-activating factor acetylhydrolase IB subunit alpha1 (232 aa).

The tract at residues 1 to 20 is disordered; it reads MSGEGENPASKPTPVQDVQG. Serine 2 is subject to N-acetylserine. A Phosphoserine modification is found at serine 2. Active-site residues include serine 48, aspartate 193, and histidine 196.

Belongs to the 'GDSL' lipolytic enzyme family. Platelet-activating factor acetylhydrolase IB beta/gamma subunits subfamily. In terms of assembly, forms a catalytic dimer which is either homodimer (alpha1/alpha1 homodimer) or heterodimer with PAFAH1B2 (alpha1/alpha2 heterodimer). Component of the cytosolic (PAF-AH (I)) heterotetrameric enzyme, which is composed of PAFAH1B1 (beta), PAFAH1B2 (alpha2) and PAFAH1B3 (alpha1) subunits. The catalytic activity of the enzyme resides in the alpha1 (PAFAH1B3) and alpha2 (PAFAH1B2) subunits, whereas the beta subunit (PAFAH1B1) has regulatory activity. Trimer formation is not essential for the catalytic activity. Interacts with VLDLR; this interaction may modulate the Reelin pathway.

The protein localises to the cytoplasm. It catalyses the reaction a 1-O-alkyl-2-acetyl-sn-glycero-3-phosphocholine + H2O = a 1-O-alkyl-sn-glycero-3-phosphocholine + acetate + H(+). The enzyme catalyses 1-O-hexadecyl-2-acetyl-sn-glycero-3-phosphocholine + H2O = 1-O-hexadecyl-sn-glycero-3-phosphocholine + acetate + H(+). The catalysed reaction is 1-O-hexadecyl-2-acetyl-sn-glycero-3-phosphate + H2O = 1-O-hexadecyl-sn-glycero-3-phosphate + acetate + H(+). Beta subunit (PAFAH1B1) inhibits the acetylhydrolase activity of the alpha1/alpha1 catalytic homodimer. Functionally, alpha1 catalytic subunit of the cytosolic type I platelet-activating factor (PAF) acetylhydrolase (PAF-AH (I)) heterotetrameric enzyme that catalyzes the hydrolyze of the acetyl group at the sn-2 position of PAF and its analogs and modulates the action of PAF. The activity and substrate specificity of PAF-AH (I) are affected by its subunit composition. Both alpha1/alpha1 homodimer (PAFAH1B3/PAFAH1B3 homodimer) and alpha1/alpha2 heterodimer(PAFAH1B3/PAFAH1B2 heterodimer) hydrolyze 1-O-alkyl-2-acetyl-sn-glycero-3-phosphoric acid (AAGPA) more efficiently than PAF, but they have little hydrolytic activity towards 1-O-alkyl-2-acetyl-sn-glycero-3-phosphorylethanolamine (AAGPE). Plays an important role during the development of brain. This is Platelet-activating factor acetylhydrolase IB subunit alpha1 from Mus musculus (Mouse).